Reading from the N-terminus, the 394-residue chain is Phosphoglycerate kinase (394 aa).

Substrate is bound by residues 21-23, Arg36, 59-62, Arg118, and Arg151; these read DFN and HLGR. The residue at position 183 (Ser183) is a Phosphoserine. Lys201 contributes to the ATP binding site. Thr299 carries the phosphothreonine modification. Residues Glu323 and 350 to 353 each bind ATP; that span reads GGDS.

The protein belongs to the phosphoglycerate kinase family. In terms of assembly, monomer.

It is found in the cytoplasm. The catalysed reaction is (2R)-3-phosphoglycerate + ATP = (2R)-3-phospho-glyceroyl phosphate + ADP. The protein operates within carbohydrate degradation; glycolysis; pyruvate from D-glyceraldehyde 3-phosphate: step 2/5. The protein is Phosphoglycerate kinase of Shouchella clausii (strain KSM-K16) (Alkalihalobacillus clausii).